Reading from the N-terminus, the 179-residue chain is Large ribosomal subunit protein uL5 (179 aa).

The protein belongs to the universal ribosomal protein uL5 family. Part of the 50S ribosomal subunit; part of the 5S rRNA/L5/L18/L25 subcomplex. Contacts the 5S rRNA and the P site tRNA. Forms a bridge to the 30S subunit in the 70S ribosome.

Functionally, this is one of the proteins that bind and probably mediate the attachment of the 5S RNA into the large ribosomal subunit, where it forms part of the central protuberance. In the 70S ribosome it contacts protein S13 of the 30S subunit (bridge B1b), connecting the 2 subunits; this bridge is implicated in subunit movement. Contacts the P site tRNA; the 5S rRNA and some of its associated proteins might help stabilize positioning of ribosome-bound tRNAs. This is Large ribosomal subunit protein uL5 from Oceanobacillus iheyensis (strain DSM 14371 / CIP 107618 / JCM 11309 / KCTC 3954 / HTE831).